A 231-amino-acid chain; its full sequence is Phosphoglycolate phosphatase (231 aa).

Catalysis depends on Asp9, which acts as the Nucleophile. Residues Asp9 and Asp11 each contribute to the Mg(2+) site. Residue Lys154 participates in substrate binding. Mg(2+)-binding residues include Asp177 and Asp181.

Belongs to the archaeal SPP-like hydrolase family. It depends on Mg(2+) as a cofactor.

The enzyme catalyses 2-phosphoglycolate + H2O = glycolate + phosphate. Catalyzes the dephosphorylation of 2-phosphoglycolate. This is Phosphoglycolate phosphatase from Nitrosopumilus maritimus (strain SCM1).